The chain runs to 202 residues: Imidazoleglycerol-phosphate dehydratase (202 aa).

Belongs to the imidazoleglycerol-phosphate dehydratase family.

It is found in the cytoplasm. It carries out the reaction D-erythro-1-(imidazol-4-yl)glycerol 3-phosphate = 3-(imidazol-4-yl)-2-oxopropyl phosphate + H2O. The protein operates within amino-acid biosynthesis; L-histidine biosynthesis; L-histidine from 5-phospho-alpha-D-ribose 1-diphosphate: step 6/9. The chain is Imidazoleglycerol-phosphate dehydratase from Acinetobacter baumannii (strain AYE).